We begin with the raw amino-acid sequence, 357 residues long: Glutamine synthetase (357 aa).

In terms of domain architecture, GS beta-grasp spans 25-104 (VMAEYIWIDA…VLCETWDSDG (80 aa)). A GS catalytic domain is found at 111–357 (YRHDCARLME…IIAETLCGGL (247 aa)).

It belongs to the glutamine synthetase family. As to quaternary structure, homooctamer.

The protein localises to the cytoplasm. The enzyme catalyses L-glutamate + NH4(+) + ATP = L-glutamine + ADP + phosphate + H(+). The polypeptide is Glutamine synthetase (glnA) (Emericella nidulans (strain FGSC A4 / ATCC 38163 / CBS 112.46 / NRRL 194 / M139) (Aspergillus nidulans)).